A 511-amino-acid chain; its full sequence is Prolyl 3-hydroxylase OGFOD1 (511 aa).

The segment at 1–20 (MTGKRGTAAGTDGSGNKKGK) is disordered. Positions 138-240 (KTVDISCAQY…RLSVSGWFHG (103 aa)) constitute a Fe2OG dioxygenase domain. 2 residues coordinate Fe cation: His-156 and Asp-158. Tyr-170 serves as a coordination point for 2-oxoglutarate. Residue His-219 participates in Fe cation binding. Arg-231 contacts 2-oxoglutarate. The interval 372–403 (NEESDEGEGPSEPNTVSQQGASSEDDKVPSCS) is disordered.

Belongs to the TPA1 family. As to quaternary structure, monomer. Fe(2+) serves as cofactor. L-ascorbate is required as a cofactor.

The protein resides in the cytoplasm. Its subcellular location is the nucleus. The catalysed reaction is [ribosomal protein uS12]-L-proline + 2-oxoglutarate + O2 = [ribosomal protein uS12]-(3S)-3-hydroxy-L-proline + succinate + CO2. Functionally, prolyl 3-hydroxylase that catalyzes 3-hydroxylation of 'Pro-62' of small ribosomal subunit uS12 (rps23), thereby regulating protein translation termination efficiency. Involved in stress granule formation. The chain is Prolyl 3-hydroxylase OGFOD1 (ogfod1) from Xenopus laevis (African clawed frog).